Here is a 77-residue protein sequence, read N- to C-terminus: Translational regulator CsrA (77 aa).

This sequence belongs to the CsrA/RsmA family. In terms of assembly, homodimer; the beta-strands of each monomer intercalate to form a hydrophobic core, while the alpha-helices form wings that extend away from the core.

The protein resides in the cytoplasm. In terms of biological role, a translational regulator that binds mRNA to regulate translation initiation and/or mRNA stability. Usually binds in the 5'-UTR at or near the Shine-Dalgarno sequence preventing ribosome-binding, thus repressing translation. Its main target seems to be the major flagellin gene, while its function is anatagonized by FliW. This Pseudarthrobacter chlorophenolicus (strain ATCC 700700 / DSM 12829 / CIP 107037 / JCM 12360 / KCTC 9906 / NCIMB 13794 / A6) (Arthrobacter chlorophenolicus) protein is Translational regulator CsrA.